We begin with the raw amino-acid sequence, 87 residues long: MEKIFKVTSDSGIHARPATLLVNTASKFGSDINLEYNGKNVNLKSIMGVMSLGIQQNAEIKITANGDDAAQALAAIEETMKNEGLGE.

One can recognise an HPr domain in the interval 1–87 (MEKIFKVTSD…ETMKNEGLGE (87 aa)). The active-site Pros-phosphohistidine intermediate; alternate is H14. H14 bears the Tele-phosphohistidine; alternate mark. S45 is subject to Phosphoserine; by HPrK/P.

The protein belongs to the HPr family. Post-translationally, the form phosphorylated at the tele nitrogen (N(epsilon)2), instead of the expected pros nitrogen (N(delta)1), of His-14 is not able to transfer its phosphoryl group to the B.subtilis EIIA-Glc domain. This form may be inactive in PTS-catalyzed sugar transport or target an as yet unknown acceptor molecule in an alternative metabolic process.

The protein resides in the cytoplasm. Its activity is regulated as follows. Phosphorylation on Ser-45 inhibits the phosphoryl transfer from enzyme I to HPr. Functionally, general (non sugar-specific) component of the phosphoenolpyruvate-dependent sugar phosphotransferase system (sugar PTS). This major carbohydrate active-transport system catalyzes the phosphorylation of incoming sugar substrates concomitantly with their translocation across the cell membrane. The phosphoryl group from phosphoenolpyruvate (PEP) is transferred to the phosphoryl carrier protein HPr by enzyme I. Phospho-HPr then transfers it to the PTS EIIA domain. In terms of biological role, P-Ser-HPr interacts with the catabolite control protein A (CcpA), forming a complex that binds to DNA at the catabolite response elements cre, operator sites preceding a large number of catabolite-regulated genes. Thus, P-Ser-HPr is a corepressor in carbon catabolite repression (CCR), a mechanism that allows bacteria to coordinate and optimize the utilization of available carbon sources. P-Ser-HPr mediates glucose catabolite repression of cry4A toxin expression. The polypeptide is Phosphocarrier protein HPr (ptsH) (Bacillus thuringiensis subsp. israelensis).